Reading from the N-terminus, the 192-residue chain is MPPLILASSSPYRRELLARLQLPFSVQSPNIDESPQLGEAPEHTALRLAQAKARKVAETFPNALIIGCDQVATLDGLQLGKPLTHDNAVRQLTLMRGRSVVFHSALCVYNALTQEMQADVVPYTVKFRDLSDRQIESYLQKEQPYQCAGSAKSEGLGIAIIAAMQGDDPNALIGLPLIRLIDMLASQGVDVI.

Aspartate 69 (proton acceptor) is an active-site residue.

This sequence belongs to the Maf family. YceF subfamily. Requires a divalent metal cation as cofactor.

It localises to the cytoplasm. It carries out the reaction N(7)-methyl-GTP + H2O = N(7)-methyl-GMP + diphosphate + H(+). Its function is as follows. Nucleoside triphosphate pyrophosphatase that hydrolyzes 7-methyl-GTP (m(7)GTP). May have a dual role in cell division arrest and in preventing the incorporation of modified nucleotides into cellular nucleic acids. This Methylobacillus flagellatus (strain ATCC 51484 / DSM 6875 / VKM B-1610 / KT) protein is 7-methyl-GTP pyrophosphatase.